We begin with the raw amino-acid sequence, 232 residues long: Large ribosomal subunit protein uL1 (232 aa).

The protein belongs to the universal ribosomal protein uL1 family. In terms of assembly, part of the 50S ribosomal subunit.

Its function is as follows. Binds directly to 23S rRNA. The L1 stalk is quite mobile in the ribosome, and is involved in E site tRNA release. Functionally, protein L1 is also a translational repressor protein, it controls the translation of the L11 operon by binding to its mRNA. The chain is Large ribosomal subunit protein uL1 from Hahella chejuensis (strain KCTC 2396).